The chain runs to 254 residues: 3-oxo-5-alpha-steroid 4-dehydrogenase 2 (254 aa).

Transmembrane regions (helical) follow at residues 8 to 28 (SPVL…LYFA), 72 to 92 (PRSL…AHYF), 146 to 166 (FSLG…SDYI), and 206 to 226 (LATW…FLGL).

This sequence belongs to the steroid 5-alpha reductase family.

The protein localises to the microsome membrane. Its subcellular location is the endoplasmic reticulum membrane. It catalyses the reaction a 3-oxo-5alpha-steroid + NADP(+) = a 3-oxo-Delta(4)-steroid + NADPH + H(+). It carries out the reaction 17beta-hydroxy-5alpha-androstan-3-one + NADP(+) = testosterone + NADPH + H(+). The catalysed reaction is 5alpha-pregnane-3,20-dione + NADP(+) = progesterone + NADPH + H(+). Converts testosterone (T) into 5-alpha-dihydrotestosterone (DHT) and progesterone or corticosterone into their corresponding 5-alpha-3-oxosteroids. It plays a central role in sexual differentiation and androgen physiology. The sequence is that of 3-oxo-5-alpha-steroid 4-dehydrogenase 2 (SRD5A2) from Sus scrofa (Pig).